A 326-amino-acid polypeptide reads, in one-letter code: UDP-N-acetylglucosamine transporter (326 aa).

A run of 8 helical transmembrane segments spans residues 4 to 24, 38 to 58, 136 to 156, 174 to 194, 212 to 232, 243 to 263, 269 to 289, and 293 to 313; these read NLKY…VLTM, LSST…IFLV, LGMY…FVQW, FVGL…GVYF, LGFF…GELV, QLTW…AAVI, ILKG…SYFW, and FVPT…TFLY.

The protein belongs to the nucleotide-sugar transporter family. SLC35A subfamily. In terms of assembly, interacts with SLC35A2; the interaction is reduced in the presence of SLC35A4. Found in a complex with SLC35A2 and SLC35A4. Interacts with MGAT4B. O-Glcnacylation regulates the stability of SLC35A3 and the specific complex formation with MGAT4B.

It localises to the golgi apparatus membrane. It catalyses the reaction UMP(out) + UDP-N-acetyl-alpha-D-glucosamine(in) = UMP(in) + UDP-N-acetyl-alpha-D-glucosamine(out). In terms of biological role, transports diphosphate-N-acetylglucosamine (UDP-GlcNAc) from the cytosol into the lumen of the Golgi apparatus, functioning as an antiporter that exchanges UDP-N-acetyl-alpha-D-glucosamine for UMP. May supply UDP-GlcNAc as substrate for Golgi-resident glycosyltransferases that generate highly branched, multiantennary complex N-glycans and keratan sulfate. However, the exact role of SLC35A3 still needs to be elucidated, it could be a member of a catalytically more efficient multiprotein complex rather than function independently as a single transporter. This chain is UDP-N-acetylglucosamine transporter (Slc35a3), found in Rattus norvegicus (Rat).